Here is a 1057-residue protein sequence, read N- to C-terminus: Carbamoyl phosphate synthase large chain (1057 aa).

Residues 1–401 (MPKRNDIKTI…SLLKAIRSLE (401 aa)) are carboxyphosphate synthetic domain. Residues Arg129, Arg169, Gly175, Gly176, Lys208, Ile210, Glu215, Gly241, Ile242, His243, Gln284, and Glu298 each coordinate ATP. Positions 133 to 327 (RNLMNELNEP…IAKLAAKIAV (195 aa)) constitute an ATP-grasp 1 domain. Mg(2+)-binding residues include Gln284, Glu298, and Asn300. Mn(2+) contacts are provided by Gln284, Glu298, and Asn300. An oligomerization domain region spans residues 402–546 (YGVHHLGLPN…YGTYETENES (145 aa)). The interval 547–929 (IRSDKKKVVV…ALYKGLVASG (383 aa)) is carbamoyl phosphate synthetic domain. The 191-residue stretch at 671–861 (EALMQRIEIP…MANLAMKAIL (191 aa)) folds into the ATP-grasp 2 domain. Residues Arg707, Arg746, Leu748, Glu752, Gly777, Val778, His779, Ser780, Gln820, and Glu832 each contribute to the ATP site. Gln820, Glu832, and Asn834 together coordinate Mg(2+). Gln820, Glu832, and Asn834 together coordinate Mn(2+). One can recognise an MGS-like domain in the interval 930 to 1057 (LQVKDHGTVL…ESMTFNMNQM (128 aa)). The segment at 930–1057 (LQVKDHGTVL…ESMTFNMNQM (128 aa)) is allosteric domain.

This sequence belongs to the CarB family. In terms of assembly, composed of two chains; the small (or glutamine) chain promotes the hydrolysis of glutamine to ammonia, which is used by the large (or ammonia) chain to synthesize carbamoyl phosphate. Tetramer of heterodimers (alpha,beta)4. Mg(2+) is required as a cofactor. Requires Mn(2+) as cofactor.

The enzyme catalyses hydrogencarbonate + L-glutamine + 2 ATP + H2O = carbamoyl phosphate + L-glutamate + 2 ADP + phosphate + 2 H(+). It carries out the reaction hydrogencarbonate + NH4(+) + 2 ATP = carbamoyl phosphate + 2 ADP + phosphate + 2 H(+). It functions in the pathway amino-acid biosynthesis; L-arginine biosynthesis; carbamoyl phosphate from bicarbonate: step 1/1. Its pathway is pyrimidine metabolism; UMP biosynthesis via de novo pathway; (S)-dihydroorotate from bicarbonate: step 1/3. In terms of biological role, large subunit of the glutamine-dependent carbamoyl phosphate synthetase (CPSase). CPSase catalyzes the formation of carbamoyl phosphate from the ammonia moiety of glutamine, carbonate, and phosphate donated by ATP, constituting the first step of 2 biosynthetic pathways, one leading to arginine and/or urea and the other to pyrimidine nucleotides. The large subunit (synthetase) binds the substrates ammonia (free or transferred from glutamine from the small subunit), hydrogencarbonate and ATP and carries out an ATP-coupled ligase reaction, activating hydrogencarbonate by forming carboxy phosphate which reacts with ammonia to form carbamoyl phosphate. The polypeptide is Carbamoyl phosphate synthase large chain (Macrococcus caseolyticus (strain JCSC5402) (Macrococcoides caseolyticum)).